The chain runs to 402 residues: UPF0261 protein BPP1817 (402 aa).

It belongs to the UPF0261 family.

The polypeptide is UPF0261 protein BPP1817 (Bordetella parapertussis (strain 12822 / ATCC BAA-587 / NCTC 13253)).